The sequence spans 424 residues: Tyrosine--tRNA ligase (424 aa).

L-tyrosine is bound at residue Y37. The 'HIGH' region signature appears at 42–51; sequence PTADSLHLGH. Positions 174 and 178 each coordinate L-tyrosine. The 'KMSKS' region motif lies at 234–238; that stretch reads KFGKT. K237 lines the ATP pocket. Positions 357–414 constitute an S4 RNA-binding domain; it reads TGLIDALVASGLAKSKSEARTFIQSGSVAINGNKAEALDHAIGGDELLYGRFTILRRG.

It belongs to the class-I aminoacyl-tRNA synthetase family. TyrS type 1 subfamily. Homodimer.

It is found in the cytoplasm. It catalyses the reaction tRNA(Tyr) + L-tyrosine + ATP = L-tyrosyl-tRNA(Tyr) + AMP + diphosphate + H(+). Functionally, catalyzes the attachment of tyrosine to tRNA(Tyr) in a two-step reaction: tyrosine is first activated by ATP to form Tyr-AMP and then transferred to the acceptor end of tRNA(Tyr). In Dechloromonas aromatica (strain RCB), this protein is Tyrosine--tRNA ligase.